The chain runs to 540 residues: Mitochondrial antiviral-signaling protein (540 aa).

Proline 2 is subject to N-acetylproline. Residues 2–513 (PFAEDKTYKY…REVPCHRPSP (512 aa)) are Cytoplasmic-facing. Residues lysine 7 and lysine 10 each participate in a glycyl lysine isopeptide (Lys-Gly) (interchain with G-Cter in ubiquitin) cross-link. A CARD domain is found at 10–77 (KYICRNFSNF…WVEYFIAALR (68 aa)). The tract at residues 10 to 77 (KYICRNFSNF…WVEYFIAALR (68 aa)) is required for interaction with NLRX1. A lipid anchor (S-palmitoyl cysteine) is attached at cysteine 79. A disordered region spans residues 95-297 (YQPRTSDRPP…EAPANSLPSK (203 aa)). A compositionally biased stretch (pro residues) spans 106–122 (PLEPPSLPAERPGPPTP). The interval 143-147 (PVQET) is interaction with TRAF2. 2 stretches are compositionally biased toward polar residues: residues 145-165 (QETQ…QTLS) and 179-216 (ESSS…SLTP). Serine 152, serine 157, serine 165, serine 180, and serine 188 each carry phosphoserine. Residues 153–158 (PGENSE) form an interaction with TRAF6 region. Threonine 215 is subject to Phosphothreonine. Phosphoserine is present on residues serine 222 and serine 233. Position 234 is a phosphothreonine (threonine 234). Arginine 236 is modified (asymmetric dimethylarginine). The span at 241–266 (PGPTGSVVSTGTSFSSSSPGLASAGA) shows a compositional bias: low complexity. Residues serine 253 and serine 258 each carry the phosphoserine modification. Residues lysine 311 and lysine 325 each participate in a glycyl lysine isopeptide (Lys-Gly) (interchain with G-Cter in ubiquitin) cross-link. 2 disordered regions span residues 314 to 358 (ANPA…RAGM) and 373 to 419 (SAST…SELS). 3 stretches are compositionally biased toward polar residues: residues 317–331 (ASVS…TSSK), 339–355 (NALT…NSTR), and 373–382 (SASTVPTDGS). The segment covering 388 to 403 (TPAAPTPAGATGGSSA) has biased composition (low complexity). The residue at position 408 (serine 408) is a Phosphoserine. A pLxIS motif motif is present at residues 439–442 (LAIS). Phosphoserine; by TBK1 is present on serine 442. An interaction with TRAF6 region spans residues 455-460 (PEENEY). Glycyl lysine isopeptide (Lys-Gly) (interchain with G-Cter in ubiquitin) cross-links involve residues lysine 461 and lysine 500. Lysine 461 participates in a covalent cross-link: (Microbial infection) Glycyl lysine isopeptide (Lys-Gly) (interchain with G-Cter in UFM1). The disordered stretch occupies residues 476–507 (IQLLEGNPGPPADPDGGPRPQADRKFQEREVP). Basic and acidic residues predominate over residues 496 to 507 (QADRKFQEREVP). Residues 514–534 (GALWLQVAVTGVLVVTLLVVL) form a helical membrane-spanning segment. Topologically, residues 535 to 540 (YRRRLH) are mitochondrial intermembrane.

Self-associates and polymerizes (via CARD domains) to form 400 nM long three-stranded helical filaments on mitochondria, filament nucleation requires interaction with RIGI whose CARD domains act as a template for filament assembly. Interacts with RIGI, IFIH1/MDA5, TRAF2, TRAF6 and C1QBP. May interact with FADD, RIPK1, CHUK and IKBKB. Interacts (when phosphorylated) with IRF3; following activation and phosphorylation on the pLxIS motif by TBK1, recruits IRF3. Interacts with NLRX1. Interaction with NLRX1 requires the CARD domain. Interacts with PSMA7. Interacts with TRAFD1. Interacts (via C-terminus) with PCBP2 in a complex containing MAVS/IPS1, PCBP2 and ITCH. Interacts with CYLD. Interacts with SRC. Interacts with DHX58/LGP2 and IKBKE. Interacts with STING1. Interacts with IFIT3 (via N-terminus). Interacts with TBK1 only in the presence of IFIT3. Interacts with TTLL12; the interaction prevents MAVS binding to TBK1 and IKBKE. Interacts with MUL1. Interacts with ANKRD17. Interacts with NDFIP1. Interacts with SMURF1; the interaction is mediated by NDFIP1 and leads to MAVS ubiquitination and degradation. Interacts with UBXN1; this interaction inhibits MAVS-mediated antiviral pathway. Interacts (via C-terminus) with GPATCH3; the interaction is markedly increased upon viral infection. Directly interacts (via CARD domain) with ATG5 and ATG12, either as ATG5 and ATG12 monomers or as ATG12-ATG5 conjugates. Interacts with DHX33 (via the helicase C-terminal domain). Interacts with DDX3X (via C-terminus); this interaction occurs rapidly, but transiently after Sendai virus infection. The interaction with DDX3X potentiates MAVS-mediated IFNB induction. Conversely inhibition of this interaction, for instance by HCV core protein, prevents MAVS-mediated IFNB induction. Transiently interacts with TRAF3 early during Sendai virus infection. Interacts with CLPB; the interaction is enhanced by Sendai virus infection. Interacts with TRAF3IP3. Interacts with TOMM70; the interaction is enhanced by Sendai virus infection. Interacts with ZNFX1. Interacts with N4BP3; this interaction promotes the polyubiquitination of MAVS. Interacts with TAX1BP1; this interaction induces MAVS polyubiquitination. Interacts with NLRP3; promoting NLRP3 recruitment to mitochondria and activation of the NLRP3 inflammasome. Interacts with ECSIT; this interaction bridges RIGI to the MAVS complex at the mitochondrion. Interacts with UBL7; this interaction promotes MAVS 'Lys-27'-linked ubiquitination leading to type I interferon production. Interacts (via transmembrane domain) with SMIM30/MAVI1 (via transmembrane domain); the interaction disrupts MAVS interaction with RIGI and inhibits MAVS aggregation, resulting in the repression of type I interferon signaling and innate immune responses. In terms of assembly, (Microbial infection) Interacts with hepatitis C virus (HCV) NS3/4A protease; this interaction leads to MAVS cleavage, thereby preventing the establishment of an antiviral state. As to quaternary structure, (Microbial infection) Interacts with hepatitis GB virus B NS3/4A protease; this interaction leads to MAVS cleavage. (Microbial infection) Interacts with human respiratory syncytial virus/HRSV protein NS1; this interaction disrupts MAVS binding to RIGI. In terms of assembly, (Microbial infection) Interacts with Andes virus Nnon-structural protein NS-S; this interaction may reduce MAVS ubiquitination and leads to inhibition of MAVS-induced type-I IFN signaling pathway. As to quaternary structure, (Microbial infection) Interacts with Seneca Valley virus protease 3C; this interaction allows the cleavage of MAVS and subsequent suppression of host innate immunity. (Microbial infection) Interacts with SARS-CoV virus protein ORF9b; this interaction mediates MAVS proteasomal degradation. In terms of assembly, (Microbial infection) Interacts with SARS-CoV-2 virus protein M; this interaction impairs MAVS self-association and its recruitment of downstream components. As to quaternary structure, (Microbial infection) Interacts with foot-and-mouth disease virus protein VP1; this interaction competes with TRAF3 interaction to MAVS leading to suppression of host innate immunity. (Microbial infection) Interacts with Epstein-Barr virus protein BILF1; this interaction mediates MAVS routing from mitochondria to lysosomes. Following activation, phosphorylated by TBK1 at Ser-442 in the pLxIS motif. The phosphorylated pLxIS motif constitutes an IRF3-binding motif, leading to recruitment of the transcription factor IRF3 to induce type-I interferons and other cytokines. Post-translationally, ubiquitinated. Undergoes 'Lys-48'-linked polyubiquitination catalyzed by ITCH; ITCH-dependent polyubiquitination is mediated by the interaction with PCBP2 and leads to MAVS/IPS1 proteasomal degradation. Ubiquitinated by RNF125, leading to its degradation by the proteasome. Undergoes 'Lys-48'-linked ubiquitination catalyzed by SMURF1. Undergoes 'Lys-48'-linked ubiquitination catalyzed by MARCHF5 at Lys-7 and Lys-500, leading to proteasomal degradation. Ubiquitinated via 'Lys-63'-linked ubiquitination at Lys-10, Lys-311 and Lys-461 by UBE2N and TRIM31, promoting MAVS polymerization and formation of three-stranded helical filaments on mitochondria. Undergoes 'Lys-63'-linked ubiquitination leading to enhanced interaction between MAVS and TRAF2. Undergoes 'Lys-27'-linked ubiquitination by TRIM21 leading to enhanced interaction between MAVS and TBK1. Deubiquitinated by USP10 leading to attenuation of RIGI-mediated MAVS aggregation and production of type I interferon. Undergoes 'Lys-48'-linked polyubiquitination catalyzed by RNF115 leading to its degradation. In terms of processing, palmitoylated by ZHDDC4. Palmitoylation promotes MAVS stabilization and activation by inhibiting 'Lys-48'- but facilitating 'Lys-63'-linked ubiquitination. Proteolytically cleaved by apoptotic caspases during apoptosis, leading to its inactivation. Cleavage by CASP3 during virus-induced apoptosis inactivates it, preventing cytokine overproduction. Post-translationally, (Microbial infection) Cleaved and degraded by hepatitis A virus (HAV) protein 3ABC allowing the virus to disrupt the activation of host IRF3 through the MDA5 pathway. In terms of processing, (Microbial infection) Cleaved by the protease 2A of coxsackievirus B3, poliovirus and enterovirus 71 allowing the virus to disrupt the host type I interferon production. (Microbial infection) Cleaved by Seneca Valley virus protease 3C allowing the virus to suppress interferon type-I production. Post-translationally, (Microbial infection) Cleaved by HCV protease NS3/4A, thereby preventing the establishment of an antiviral state. In terms of processing, (Microbial infection) UFMylated by ULF1 in association with Epstein-Barr virus BILF1; leading to MAVS routing to the lysosome. Present in T-cells, monocytes, epithelial cells and hepatocytes (at protein level). Ubiquitously expressed, with highest levels in heart, skeletal muscle, liver, placenta and peripheral blood leukocytes.

Its subcellular location is the mitochondrion outer membrane. It localises to the mitochondrion. It is found in the peroxisome. Its function is as follows. Adapter required for innate immune defense against viruses. Acts downstream of DHX33, RIGI and IFIH1/MDA5, which detect intracellular dsRNA produced during viral replication, to coordinate pathways leading to the activation of NF-kappa-B, IRF3 and IRF7, and to the subsequent induction of antiviral cytokines such as IFNB and RANTES (CCL5). Peroxisomal and mitochondrial MAVS act sequentially to create an antiviral cellular state. Upon viral infection, peroxisomal MAVS induces the rapid interferon-independent expression of defense factors that provide short-term protection, whereas mitochondrial MAVS activates an interferon-dependent signaling pathway with delayed kinetics, which amplifies and stabilizes the antiviral response. May activate the same pathways following detection of extracellular dsRNA by TLR3. May protect cells from apoptosis. Involved in NLRP3 inflammasome activation by mediating NLRP3 recruitment to mitochondria. The sequence is that of Mitochondrial antiviral-signaling protein from Homo sapiens (Human).